Consider the following 217-residue polypeptide: ATP-dependent Clp protease proteolytic subunit (217 aa).

Serine 121 (nucleophile) is an active-site residue. The active site involves histidine 146.

It belongs to the peptidase S14 family. As to quaternary structure, fourteen ClpP subunits assemble into 2 heptameric rings which stack back to back to give a disk-like structure with a central cavity, resembling the structure of eukaryotic proteasomes.

Its subcellular location is the cytoplasm. It carries out the reaction Hydrolysis of proteins to small peptides in the presence of ATP and magnesium. alpha-casein is the usual test substrate. In the absence of ATP, only oligopeptides shorter than five residues are hydrolyzed (such as succinyl-Leu-Tyr-|-NHMec, and Leu-Tyr-Leu-|-Tyr-Trp, in which cleavage of the -Tyr-|-Leu- and -Tyr-|-Trp bonds also occurs).. Functionally, cleaves peptides in various proteins in a process that requires ATP hydrolysis. Has a chymotrypsin-like activity. Plays a major role in the degradation of misfolded proteins. The protein is ATP-dependent Clp protease proteolytic subunit of Burkholderia lata (strain ATCC 17760 / DSM 23089 / LMG 22485 / NCIMB 9086 / R18194 / 383).